We begin with the raw amino-acid sequence, 475 residues long: MKKLLLILCCITLLAACQKVVVEQEEPVFIPEPTELVVGTLYGPQIYFTSGQGDSGYDYEMAERFAKYLNLKLKMRAFANISELYAAMRSGEIDIIAAGLGDTPARREQFRVGPPLYRVDQVLVYRQGTPVPKNINSLNGEITVITDSSFVDTLTDLQKSNPDLVWNQEKDKDAEELLTMIAAGDIPYTIADSTSLDINRRFMPELREGLVLKKKQPVVWLLPANNSDKLMSQLLAFWHIEKRSGTLAHLNEKYFAHVKRFDYVDTRAFIRAIDNKLPKYQSTFEKYAGDIDWRKLAATAYQESHWNPNARSPTGVRGLMMLTLPTAKQVGIKNRLDPYQSIQGGAKYLNSMLERLPESIPDSQRMWFALASYNIGLGHVEDARKLAQTQGLNPSAWRDVKSVLPLLQKRKYYKKTRYGYARGNEAVHYVDSIRRYYDTLVWIDNQNMLLELKKENIQMAENLEQKTEAAQPQQP.

The N-terminal stretch at Met-1–Ala-15 is a signal peptide. Residues Ala-16–Val-258 form a non-LT domain region. Positions Lys-259–Pro-475 are LT domain. Residue Glu-303 is part of the active site.

The protein in the N-terminal section; belongs to the bacterial solute-binding protein 3 family. It in the C-terminal section; belongs to the transglycosylase Slt family.

It localises to the cell outer membrane. The catalysed reaction is Exolytic cleavage of the (1-&gt;4)-beta-glycosidic linkage between N-acetylmuramic acid (MurNAc) and N-acetylglucosamine (GlcNAc) residues in peptidoglycan, from either the reducing or the non-reducing ends of the peptidoglycan chains, with concomitant formation of a 1,6-anhydrobond in the MurNAc residue.. Murein-degrading enzyme that degrades murein glycan strands and insoluble, high-molecular weight murein sacculi, with the concomitant formation of a 1,6-anhydromuramoyl product. Lytic transglycosylases (LTs) play an integral role in the metabolism of the peptidoglycan (PG) sacculus. Their lytic action creates space within the PG sacculus to allow for its expansion as well as for the insertion of various structures such as secretion systems and flagella. This is Membrane-bound lytic murein transglycosylase F from Shewanella halifaxensis (strain HAW-EB4).